The primary structure comprises 505 residues: ATP synthase subunit alpha, chloroplastic (505 aa).

An ATP-binding site is contributed by 170 to 177 (GDRQTGKT).

The protein belongs to the ATPase alpha/beta chains family. As to quaternary structure, F-type ATPases have 2 components, CF(1) - the catalytic core - and CF(0) - the membrane proton channel. CF(1) has five subunits: alpha(3), beta(3), gamma(1), delta(1), epsilon(1). CF(0) has four main subunits: a, b, b' and c.

The protein resides in the plastid. The protein localises to the chloroplast thylakoid membrane. It carries out the reaction ATP + H2O + 4 H(+)(in) = ADP + phosphate + 5 H(+)(out). Produces ATP from ADP in the presence of a proton gradient across the membrane. The alpha chain is a regulatory subunit. In Oenothera parviflora (Small-flowered evening primrose), this protein is ATP synthase subunit alpha, chloroplastic.